A 330-amino-acid polypeptide reads, in one-letter code: Putative 1-aminocyclopropane-1-carboxylate deaminase (330 aa).

Lys-54 bears the N6-(pyridoxal phosphate)lysine mark.

Belongs to the ACC deaminase/D-cysteine desulfhydrase family. Pyridoxal 5'-phosphate is required as a cofactor.

It carries out the reaction 1-aminocyclopropane-1-carboxylate + H2O = 2-oxobutanoate + NH4(+). The polypeptide is Putative 1-aminocyclopropane-1-carboxylate deaminase (Pyrococcus abyssi (strain GE5 / Orsay)).